The primary structure comprises 199 residues: Pneumococcal vaccine antigen A homolog (199 aa).

The protein localises to the cell surface. The chain is Pneumococcal vaccine antigen A homolog (pvaA) from Streptococcus pyogenes serotype M6 (strain ATCC BAA-946 / MGAS10394).